Consider the following 377-residue polypeptide: Stimulator of interferon genes protein 7 (377 aa).

The next 4 helical transmembrane spans lie at 30–50 (TAAITSAIIGVSSGAMLFLAV), 57–77 (THFLVFTAALLTLSFAFGELL), 106–126 (FTFDHGGCISLTAMFSALILC), and 141–161 (FAILFSVNCLVVPQLLFLVGL).

The protein belongs to the STING family.

It is found in the membrane. Facilitator of innate immune signaling that acts as a sensor of second messenger signals produced by cyclic GMP-AMP synthase-like receptors (cGLRs) and promotes the production of type I interferon. Innate immune response is triggered in response to nucleotides from viruses and bacteria delivered to the cytoplasm. Acts by binding cyclic dinucleotides: recognizes and binds a large variety of 2'-3'- and 3'-3' linked cyclic dinucleotides (2'-3'-cGAMP, 3'-3'-cGAMP, 2',3'-cUAMP, 3',3'-cUAMP and/or 3',3'-c-di-GMP) second messengers produced by cGLRs in response to nucleotides in the cytosol, such as double-stranded RNA (dsRNA). Upon binding to cyclic dinucleotides, oligomerizes and promotes the recruitment and subsequent activation of the transcription factor IRF3 to induce expression of type I interferon. This is Stimulator of interferon genes protein 7 from Stylophora pistillata (Smooth cauliflower coral).